A 117-amino-acid polypeptide reads, in one-letter code: NADH dehydrogenase [ubiquinone] 1 beta subcomplex subunit 9 (117 aa).

An N-acetylserine modification is found at Ser2.

This sequence belongs to the complex I LYR family. In terms of assembly, complex I is composed of at least 49 different subunits. Expressed in roots, stems, flowers, rosette leaves, cauline leaves and siliques, with the highest expression in the stems.

The protein resides in the mitochondrion inner membrane. Functionally, accessory subunit of the mitochondrial membrane respiratory chain NADH dehydrogenase (Complex I), that is believed to be not involved in catalysis. Complex I functions in the transfer of electrons from NADH to the respiratory chain. The immediate electron acceptor for the enzyme is believed to be ubiquinone. Is required for correct plant growth and development. This chain is NADH dehydrogenase [ubiquinone] 1 beta subcomplex subunit 9 (CIB22), found in Arabidopsis thaliana (Mouse-ear cress).